The following is a 475-amino-acid chain: MTAPRTLYDKIWDDHVVHQSEDGTCLLYIDRHLVHEVTSPQAFEGLRMTGRKVRAPEKTIAVPDHNVPTTEGRDTKIDNEESRIQVEALDKNARDFGINYYPVSDIRQGIVHIVGPEQGWTLPGMTVVCGDSHTATHGAFGALAHGIGTSEVEHVLATQTLIQKKSKNMKVEITGSLRPGVTAKDITLSVIGLTGTAGGTGYVIEYCGQAIRELSMEGRMTVCNMAIEGGARAGLIAPDEKTFAYVMGRPHAPKGAAWEAALAYWKTLFTDEGAQFDKVVTIRGEDIAPVVTWGTSPEDVLPITATVPAPEDFTGGKVEAARRSLEYMGLTPGQKLTDIKIDTVFIGSCTNGRIEDLRAAAEILKGKKVAPGMRAMVVPGSGLVRAQAEEEGLAQIFIDAGFEWRLAGCSMCLAMNPDQLSPGERCASTSNRNFEGRQGRNGRTHLVSPGMAAAAAITGHLTDVRDLMTAPAEPA.

Residues C349, C409, and C412 each contribute to the [4Fe-4S] cluster site.

The protein belongs to the aconitase/IPM isomerase family. LeuC type 1 subfamily. As to quaternary structure, heterodimer of LeuC and LeuD. Requires [4Fe-4S] cluster as cofactor.

The catalysed reaction is (2R,3S)-3-isopropylmalate = (2S)-2-isopropylmalate. Its pathway is amino-acid biosynthesis; L-leucine biosynthesis; L-leucine from 3-methyl-2-oxobutanoate: step 2/4. Functionally, catalyzes the isomerization between 2-isopropylmalate and 3-isopropylmalate, via the formation of 2-isopropylmaleate. The polypeptide is 3-isopropylmalate dehydratase large subunit (Cereibacter sphaeroides (strain KD131 / KCTC 12085) (Rhodobacter sphaeroides)).